Here is a 368-residue protein sequence, read N- to C-terminus: Alanine racemase (368 aa).

The active-site Proton acceptor; specific for D-alanine is Lys40. At Lys40 the chain carries N6-(pyridoxal phosphate)lysine. Arg134 is a binding site for substrate. Tyr263 acts as the Proton acceptor; specific for L-alanine in catalysis. Met310 lines the substrate pocket.

It belongs to the alanine racemase family. The cofactor is pyridoxal 5'-phosphate.

It catalyses the reaction L-alanine = D-alanine. The protein operates within amino-acid biosynthesis; D-alanine biosynthesis; D-alanine from L-alanine: step 1/1. Functionally, catalyzes the interconversion of L-alanine and D-alanine. May also act on other amino acids. The protein is Alanine racemase (alr) of Listeria monocytogenes serotype 1/2a (strain 10403S).